The following is a 426-amino-acid chain: Histidine--tRNA ligase (426 aa).

This sequence belongs to the class-II aminoacyl-tRNA synthetase family. In terms of assembly, homodimer.

It is found in the cytoplasm. The enzyme catalyses tRNA(His) + L-histidine + ATP = L-histidyl-tRNA(His) + AMP + diphosphate + H(+). This chain is Histidine--tRNA ligase, found in Streptococcus pyogenes serotype M5 (strain Manfredo).